The sequence spans 259 residues: MNILAPVRRDRVLAELPQCLRKEAALHVRKDFHPRVTCACQEHRTGTVGFKISKVIVVGDLSVGKTCLINRFCKDTFDKNYKATIGVDFEMERFEVLGVPFSLQLWDTAGQERFKCIASTYYRGAQAIIIVFNLNDVASLEHTKQWLADALKENDPSSVLLFLVGSKKDLSTPAQYVLMEKDALKVAHEMKAEYWAVSSLTGENVREFFFRVAALTFEANVLAELEKSGSRRIGDVVRLNSDDSNLYLTASKKKPACCP.

Met1 is subject to N-acetylmethionine. GTP contacts are provided by Ser62, Val63, Gly64, Lys65, Thr66, Asp78, Tyr81, and Thr84. Thr66 is a Mg(2+) binding site. The short motif at 71 to 89 is the Switch 1 element; that stretch reads RFCKDTFDKNYKATIGVDF. Positions 84 and 107 each coordinate Mg(2+). The Switch 2 motif lies at 108-127; that stretch reads TAGQERFKCIASTYYRGAQA. GTP contacts are provided by Gly110, Lys167, Asp169, and Ser198. A phosphoserine mark is found at Ser241 and Ser244. 2 S-geranylgeranyl cysteine lipidation sites follow: Cys257 and Cys258.

This sequence belongs to the small GTPase superfamily. Rab family. As to quaternary structure, interacts with RILP. The GTP-bound form interacts with REP15. It depends on Mg(2+) as a cofactor.

It is found in the cytoplasm. It localises to the golgi apparatus. The protein localises to the cytoplasmic vesicle. The protein resides in the phagosome. Its subcellular location is the phagosome membrane. It is found in the cell projection. It localises to the cilium. The protein localises to the cytoskeleton. The protein resides in the microtubule organizing center. Its subcellular location is the centrosome. It is found in the centriole. The catalysed reaction is GTP + H2O = GDP + phosphate + H(+). Regulated by guanine nucleotide exchange factors (GEFs) which promote the exchange of bound GDP for free GTP. Regulated by GTPase activating proteins (GAPs) which increase the GTP hydrolysis activity. Inhibited by GDP dissociation inhibitors (GDIs). The small GTPases Rab are key regulators of intracellular membrane trafficking, from the formation of transport vesicles to their fusion with membranes. Rabs cycle between an inactive GDP-bound form and an active GTP-bound form that is able to recruit to membranes different sets of downstream effectors directly responsible for vesicle formation, movement, tethering and fusion. RAB34 transports protein involved in the redistribution of lysosomes to the peri-Golgi region. Plays a role in the maturation of phagosomes that engulf pathogens, such as S.aureus and M.tuberculosis. Plays a role in the fusion of phagosomes with lysosomes. Required for the early steps of intracellular ciliogenesis, the cilium assembly pathway initiated by trafficking and docking of ciliary vesicles to the centrioles in the cytoplasm, followed by axoneme formation in the cytoplasm. After axoneme elongation, the centrioles migrate close to the cell surface so that ciliary vesicles can fuse with the plasma membrane to expose cilia to the extracellular space. It seems dispensable for ciliogenesis via the extracellular pathway where cilium assembly begins after migration and docking of the centriole to the plasma membrane. Also acts as a positive regulator of hedgehog signaling and regulates ciliary function. The polypeptide is Ras-related protein Rab-34 (RAB34) (Sus scrofa (Pig)).